Here is a 239-residue protein sequence, read N- to C-terminus: Ribonuclease PH (239 aa).

Phosphate contacts are provided by residues arginine 86 and 124–126 (GTR).

This sequence belongs to the RNase PH family. As to quaternary structure, homohexameric ring arranged as a trimer of dimers.

The enzyme catalyses tRNA(n+1) + phosphate = tRNA(n) + a ribonucleoside 5'-diphosphate. Its function is as follows. Phosphorolytic 3'-5' exoribonuclease that plays an important role in tRNA 3'-end maturation. Removes nucleotide residues following the 3'-CCA terminus of tRNAs; can also add nucleotides to the ends of RNA molecules by using nucleoside diphosphates as substrates, but this may not be physiologically important. Probably plays a role in initiation of 16S rRNA degradation (leading to ribosome degradation) during starvation. The polypeptide is Ribonuclease PH (Marinomonas sp. (strain MWYL1)).